A 207-amino-acid polypeptide reads, in one-letter code: MKLRGLYAITDSQLLAGKFLSYVEAALEGGVTLLQYRDKSSDEARRLREAEALRDLCERYKTQLIINDDAELAARLNVGVHLGQTDGPLSPTRALLGYKAIIGSTCHAQLELAEQAAREGASYVAFGRFFNSNTKPGAPSCSLDLLDEAKRTLHLPICAIGGITLDNAAPLVAHGVDLLAVVHGLFGANSTAEVTRRARAFNELLKV.

4-amino-2-methyl-5-(diphosphooxymethyl)pyrimidine contacts are provided by residues 35–39 (QYRDK) and N67. Mg(2+) contacts are provided by D68 and D86. T105 provides a ligand contact to 4-amino-2-methyl-5-(diphosphooxymethyl)pyrimidine. Residue 132 to 134 (SNT) participates in 2-[(2R,5Z)-2-carboxy-4-methylthiazol-5(2H)-ylidene]ethyl phosphate binding. K135 serves as a coordination point for 4-amino-2-methyl-5-(diphosphooxymethyl)pyrimidine. A 2-[(2R,5Z)-2-carboxy-4-methylthiazol-5(2H)-ylidene]ethyl phosphate-binding site is contributed by G162.

Belongs to the thiamine-phosphate synthase family. Requires Mg(2+) as cofactor.

It catalyses the reaction 2-[(2R,5Z)-2-carboxy-4-methylthiazol-5(2H)-ylidene]ethyl phosphate + 4-amino-2-methyl-5-(diphosphooxymethyl)pyrimidine + 2 H(+) = thiamine phosphate + CO2 + diphosphate. It carries out the reaction 2-(2-carboxy-4-methylthiazol-5-yl)ethyl phosphate + 4-amino-2-methyl-5-(diphosphooxymethyl)pyrimidine + 2 H(+) = thiamine phosphate + CO2 + diphosphate. The catalysed reaction is 4-methyl-5-(2-phosphooxyethyl)-thiazole + 4-amino-2-methyl-5-(diphosphooxymethyl)pyrimidine + H(+) = thiamine phosphate + diphosphate. It functions in the pathway cofactor biosynthesis; thiamine diphosphate biosynthesis; thiamine phosphate from 4-amino-2-methyl-5-diphosphomethylpyrimidine and 4-methyl-5-(2-phosphoethyl)-thiazole: step 1/1. In terms of biological role, condenses 4-methyl-5-(beta-hydroxyethyl)thiazole monophosphate (THZ-P) and 2-methyl-4-amino-5-hydroxymethyl pyrimidine pyrophosphate (HMP-PP) to form thiamine monophosphate (TMP). The sequence is that of Thiamine-phosphate synthase from Pseudomonas fluorescens (strain Pf0-1).